The sequence spans 983 residues: Serine/threonine-protein kinase N2 (983 aa).

Residues 33-109 (KLDFSDTMVQ…LQELNAHIVV (77 aa)) enclose the REM-1 1 domain. Residue lysine 77 is modified to N6-acetyllysine. A disordered region spans residues 107–135 (IVVSDPEDSTDCPRTPDTPNSDSRSSTSN). The residue at position 110 (serine 110) is a Phosphoserine. A phosphothreonine mark is found at threonine 121 and threonine 124. Positions 121 to 135 (TPDTPNSDSRSSTSN) are enriched in low complexity. REM-1 domains are found at residues 121–203 (TPDT…TNEL) and 204–284 (AFDN…ELPR). Phosphoserine occurs at positions 301, 305, 359, and 361. The disordered stretch occupies residues 351 to 382 (TSVALPGWSPSDNRSSFMSRTSKSKSGSSRNL). The C2 domain maps to 352 to 472 (SVALPGWSPS…LYLEPQGTLF (121 aa)). A compositionally biased stretch (low complexity) spans 364–380 (RSSFMSRTSKSKSGSSR). Residues 381 to 462 (NLLKTDDLSN…FLDNQRHGMC (82 aa)) are necessary to rescue apical junction formation. Phosphoserine occurs at positions 534, 582, 619, and 630. The interval 553-588 (LAPPASDSTVTKLDFDLEPEPPPAPPRASSLGETDE) is disordered. The Protein kinase domain maps to 656–915 (FRCCAVLGRG…AEDVKKHPFF (260 aa)). ATP-binding positions include 662–670 (LGRGHFGKV) and lysine 685. Catalysis depends on aspartate 781, which acts as the Proton acceptor. Position 815 is a phosphothreonine; by PDPK1 (threonine 815). A necessary for the catalytic activity region spans residues 916–976 (RLTDWSALMD…EEEQEMFHDF (61 aa)). The region spanning 916 to 983 (RLTDWSALMD…HDFDYVADWC (68 aa)) is the AGC-kinase C-terminal domain. Serine 951 bears the Phosphoserine mark. Threonine 957 carries the phosphothreonine modification. Residues 977-983 (DYVADWC) form a negatively regulates the responsiveness of the catalytic activity by cardiolipin and is required for optimal activation by the GTP-bound RhoA region.

The protein belongs to the protein kinase superfamily. AGC Ser/Thr protein kinase family. PKC subfamily. Interacts (via the REM repeats) with RHOA (GTP-bound form preferentially) and interacts (via the REM repeats) with RAC1 (GTP-bound form preferentially); the interactions induce its autophosphorylation. Interacts with NCK1 (via SH3 domains). Interacts with RHOC. Interacts with NCK1 and NCK2. Interacts with CD44. Interacts (via C-terminal kinase domain) with PDPK1; the interaction stimulates PDPK1 kinase activity. Interacts with MAP3K2; the interaction activates PRK2 kinase activity in a MAP3K2-independent kinase activity. Interacts (via C-terminal domain) with AKT1; the interaction occurs with the C-terminal cleavage product of PRK2 in apoptotic cells. Interacts (via C-terminus) with PTPN13 (via PDZ 3 domain). Interacts with CDK10. Post-translationally, phosphorylated during mitosis. Autophosphorylated. Phosphorylated. Phosphorylated by CDK10. Activated by limited proteolysis with trypsin. Proteolytically cleaved by caspase-3 during the induction of apoptotic cell death. As to expression, ubiquitous. Highly expressed in liver and lung Expressed in astrocytes (at protein level). Ubiquitous.

It localises to the cytoplasm. It is found in the nucleus. The protein resides in the membrane. The protein localises to the cell projection. Its subcellular location is the lamellipodium. It localises to the cytoskeleton. It is found in the cleavage furrow. The protein resides in the midbody. The protein localises to the cell junction. It catalyses the reaction L-seryl-[protein] + ATP = O-phospho-L-seryl-[protein] + ADP + H(+). The enzyme catalyses L-threonyl-[protein] + ATP = O-phospho-L-threonyl-[protein] + ADP + H(+). With respect to regulation, kinase activity is activated upon binding to GTP-bound Rho1/Rac1 GTPases. Activated by caspase-3 (CASP3) cleavage during apoptosis. Activated by lipids, particularly cardiolipin and to a lesser extent by other acidic phospholipids and unsaturated fatty acids. Two specific sites, Thr-815 (activation loop of the kinase domain) and Thr-957 (turn motif), need to be phosphorylated for its full activation. PKC-related serine/threonine-protein kinase and Rho/Rac effector protein that participates in specific signal transduction responses in the cell. Plays a role in the regulation of cell cycle progression, actin cytoskeleton assembly, cell migration, cell adhesion, tumor cell invasion and transcription activation signaling processes. Phosphorylates CTTN in hyaluronan-induced astrocytes and hence decreases CTTN ability to associate with filamentous actin. Phosphorylates HDAC5, therefore lead to impair HDAC5 import. Direct RhoA target required for the regulation of the maturation of primordial junctions into apical junction formation in bronchial epithelial cells. Required for G2/M phases of the cell cycle progression and abscission during cytokinesis in a ECT2-dependent manner. Stimulates FYN kinase activity that is required for establishment of skin cell-cell adhesion during keratinocytes differentiation. Regulates epithelial bladder cells speed and direction of movement during cell migration and tumor cell invasion. Inhibits Akt pro-survival-induced kinase activity. Mediates Rho protein-induced transcriptional activation via the c-fos serum response factor (SRF). Involved in the negative regulation of ciliogenesis. The chain is Serine/threonine-protein kinase N2 (Pkn2) from Mus musculus (Mouse).